A 224-amino-acid polypeptide reads, in one-letter code: Phosphoribosylformylglycinamidine synthase subunit PurQ (224 aa).

In terms of domain architecture, Glutamine amidotransferase type-1 spans 3-224 (FGVVVFPGSN…GLLEKVVALA (222 aa)). Cys-86 functions as the Nucleophile in the catalytic mechanism. Catalysis depends on residues His-195 and Glu-197.

Part of the FGAM synthase complex composed of 1 PurL, 1 PurQ and 2 PurS subunits.

The protein resides in the cytoplasm. It catalyses the reaction N(2)-formyl-N(1)-(5-phospho-beta-D-ribosyl)glycinamide + L-glutamine + ATP + H2O = 2-formamido-N(1)-(5-O-phospho-beta-D-ribosyl)acetamidine + L-glutamate + ADP + phosphate + H(+). It carries out the reaction L-glutamine + H2O = L-glutamate + NH4(+). Its pathway is purine metabolism; IMP biosynthesis via de novo pathway; 5-amino-1-(5-phospho-D-ribosyl)imidazole from N(2)-formyl-N(1)-(5-phospho-D-ribosyl)glycinamide: step 1/2. Its function is as follows. Part of the phosphoribosylformylglycinamidine synthase complex involved in the purines biosynthetic pathway. Catalyzes the ATP-dependent conversion of formylglycinamide ribonucleotide (FGAR) and glutamine to yield formylglycinamidine ribonucleotide (FGAM) and glutamate. The FGAM synthase complex is composed of three subunits. PurQ produces an ammonia molecule by converting glutamine to glutamate. PurL transfers the ammonia molecule to FGAR to form FGAM in an ATP-dependent manner. PurS interacts with PurQ and PurL and is thought to assist in the transfer of the ammonia molecule from PurQ to PurL. This chain is Phosphoribosylformylglycinamidine synthase subunit PurQ, found in Trichormus variabilis (strain ATCC 29413 / PCC 7937) (Anabaena variabilis).